Consider the following 369-residue polypeptide: Methionine import ATP-binding protein MetN 2 (369 aa).

One can recognise an ABC transporter domain in the interval 33 to 270 (VRFIGLGKTY…PRHEVTRTLL (238 aa)). 67-74 (GRSGAGKS) contributes to the ATP binding site.

The protein belongs to the ABC transporter superfamily. Methionine importer (TC 3.A.1.24) family. The complex is composed of two ATP-binding proteins (MetN), two transmembrane proteins (MetI) and a solute-binding protein (MetQ).

The protein localises to the cell inner membrane. It catalyses the reaction L-methionine(out) + ATP + H2O = L-methionine(in) + ADP + phosphate + H(+). The enzyme catalyses D-methionine(out) + ATP + H2O = D-methionine(in) + ADP + phosphate + H(+). Part of the ABC transporter complex MetNIQ involved in methionine import. Responsible for energy coupling to the transport system. The sequence is that of Methionine import ATP-binding protein MetN 2 from Pseudomonas putida (strain ATCC 47054 / DSM 6125 / CFBP 8728 / NCIMB 11950 / KT2440).